A 492-amino-acid polypeptide reads, in one-letter code: NADH-quinone oxidoreductase subunit N (492 aa).

14 consecutive transmembrane segments (helical) span residues 18 to 38 (ILPM…NAFT), 45 to 65 (LNMF…LGLE), 80 to 100 (LSLV…FLAL), 108 to 128 (FQTA…QFMV), 133 to 153 (LLLM…LMAL), 167 to 187 (FTMG…FYLL), 209 to 229 (MLFA…VSLV), 250 to 270 (ISIV…GAFI), 277 to 297 (VEDI…LIAL), 305 to 325 (MLAY…FIHT), 333 to 353 (FVYW…LWLL), 381 to 401 (VAIL…FSVF), 415 to 435 (NHIL…FYYF), and 464 to 484 (MPIY…VFMM).

Belongs to the complex I subunit 2 family. NDH-1 is composed of 14 different subunits. Subunits NuoA, H, J, K, L, M, N constitute the membrane sector of the complex.

The protein localises to the cell inner membrane. It catalyses the reaction a quinone + NADH + 5 H(+)(in) = a quinol + NAD(+) + 4 H(+)(out). Its function is as follows. NDH-1 shuttles electrons from NADH, via FMN and iron-sulfur (Fe-S) centers, to quinones in the respiratory chain. The immediate electron acceptor for the enzyme in this species is believed to be ubiquinone. Couples the redox reaction to proton translocation (for every two electrons transferred, four hydrogen ions are translocated across the cytoplasmic membrane), and thus conserves the redox energy in a proton gradient. The sequence is that of NADH-quinone oxidoreductase subunit N from Helicobacter acinonychis (strain Sheeba).